A 676-amino-acid chain; its full sequence is DNA ligase (676 aa).

NAD(+) contacts are provided by residues 42–46 (DDVYD), 91–92 (SL), and Glu-121. The N6-AMP-lysine intermediate role is filled by Lys-123. NAD(+) is bound by residues Arg-144, Glu-178, Lys-294, and Lys-318. 4 residues coordinate Zn(2+): Cys-412, Cys-415, Cys-430, and Cys-435. The BRCT domain maps to 596–676 (NSTSEFTGKR…QLQAAMDETK (81 aa)).

The protein belongs to the NAD-dependent DNA ligase family. LigA subfamily. Mg(2+) is required as a cofactor. Requires Mn(2+) as cofactor.

The catalysed reaction is NAD(+) + (deoxyribonucleotide)n-3'-hydroxyl + 5'-phospho-(deoxyribonucleotide)m = (deoxyribonucleotide)n+m + AMP + beta-nicotinamide D-nucleotide.. Its function is as follows. DNA ligase that catalyzes the formation of phosphodiester linkages between 5'-phosphoryl and 3'-hydroxyl groups in double-stranded DNA using NAD as a coenzyme and as the energy source for the reaction. It is essential for DNA replication and repair of damaged DNA. This chain is DNA ligase, found in Levilactobacillus brevis (strain ATCC 367 / BCRC 12310 / CIP 105137 / JCM 1170 / LMG 11437 / NCIMB 947 / NCTC 947) (Lactobacillus brevis).